The sequence spans 495 residues: Alpha,alpha-trehalose-phosphate synthase [UDP-forming] 56 kDa subunit (495 aa).

The D-glucose 6-phosphate site is built by tyrosine 102 and aspartate 156. UDP contacts are provided by arginine 293 and lysine 298. 2 residues coordinate UDP-alpha-D-glucose: arginine 293 and lysine 298. Arginine 331 is a binding site for D-glucose 6-phosphate. Residues isoleucine 370 and 396–400 (LVSYE) each bind UDP. Residues isoleucine 370 and 392–400 (DGMNLVSYE) each bind UDP-alpha-D-glucose.

This sequence belongs to the glycosyltransferase 20 family. As to quaternary structure, the trehalose synthase complex is composed of the two catalytic subunits TPS1 and TPS2 and at least one of the two regulatory subunits TPS3 or TSL1.

It localises to the cytoplasm. The enzyme catalyses D-glucose 6-phosphate + UDP-alpha-D-glucose = alpha,alpha-trehalose 6-phosphate + UDP + H(+). The protein operates within carbohydrate biosynthesis. Its activity is regulated as follows. Activated by fructose 6-phosphate. Inorganic phosphate inhibits the synthase activity in the complex, but activates the synthase activity in the free monomeric form. In terms of biological role, synthase catalytic subunit of the trehalose synthase complex that catalyzes the production of trehalose from glucose-6-phosphate and UDP-alpha-D-glucose in a two step process. Can function independently of the complex. The sequence is that of Alpha,alpha-trehalose-phosphate synthase [UDP-forming] 56 kDa subunit from Saccharomyces cerevisiae (strain ATCC 204508 / S288c) (Baker's yeast).